Reading from the N-terminus, the 360-residue chain is BLOC-1-related complex subunit 6 (360 aa).

Basic and acidic residues predominate over residues 1–10 (MEAARGRLGP). Residues 1–201 (MEAARGRLGP…AGAGGGRRAT (201 aa)) are disordered. Residues 23-35 (VTFSGRPSRTLSK) are compositionally biased toward polar residues. At threonine 41 the chain carries Phosphothreonine. Basic and acidic residues predominate over residues 71–83 (HRPELDTWEDKPS). Residues 89–100 (SGARGSRGTSGS) are compositionally biased toward low complexity. Serine 130 bears the Phosphoserine mark. The span at 144-156 (EGDDDDDGDDEEA) shows a compositional bias: acidic residues. Serine 173 is modified (phosphoserine). Gly residues predominate over residues 179 to 198 (GACGGGGSSSSGEAGAGGGR). At threonine 201 the chain carries Phosphothreonine. At serine 204 the chain carries Phosphoserine.

The protein belongs to the BORCS6 family. As to quaternary structure, component of the BLOC-one-related complex (BORC) which is composed of BLOC1S1, BLOC1S2, BORCS5, BORCS6, BORCS7, BORCS8, KXD1 and SNAPIN.

The protein localises to the lysosome membrane. As part of the BORC complex may play a role in lysosomes movement and localization at the cell periphery. Associated with the cytosolic face of lysosomes, the BORC complex may recruit ARL8B and couple lysosomes to microtubule plus-end-directed kinesin motor. This Rattus norvegicus (Rat) protein is BLOC-1-related complex subunit 6.